The following is a 468-amino-acid chain: ATP synthase subunit beta (468 aa).

155-162 (GGAGVGKT) is a binding site for ATP.

This sequence belongs to the ATPase alpha/beta chains family. In terms of assembly, F-type ATPases have 2 components, CF(1) - the catalytic core - and CF(0) - the membrane proton channel. CF(1) has five subunits: alpha(3), beta(3), gamma(1), delta(1), epsilon(1). CF(0) has three main subunits: a(1), b(2) and c(9-12). The alpha and beta chains form an alternating ring which encloses part of the gamma chain. CF(1) is attached to CF(0) by a central stalk formed by the gamma and epsilon chains, while a peripheral stalk is formed by the delta and b chains.

It localises to the cell membrane. It carries out the reaction ATP + H2O + 4 H(+)(in) = ADP + phosphate + 5 H(+)(out). In terms of biological role, produces ATP from ADP in the presence of a proton gradient across the membrane. The catalytic sites are hosted primarily by the beta subunits. The polypeptide is ATP synthase subunit beta (Streptococcus pneumoniae (strain Taiwan19F-14)).